Consider the following 263-residue polypeptide: Tetraspanin-7 (263 aa).

The Cytoplasmic segment spans residues 1-7 (MVQCSNN). The helical transmembrane segment at 8 to 28 (LLGILNFFTFLLSIPILSAGI) threads the bilayer. Residues 29 to 45 (WLGKNAATECERFLDKP) are Extracellular-facing. The chain crosses the membrane as a helical span at residues 46–66 (MVVLGIFLMFVSIAGLVGACC). At 67 to 75 (RVSCLLWLY) the chain is on the cytoplasmic side. A helical transmembrane segment spans residues 76 to 96 (LFAMFLLILLGFCFTIFAFAV). At 97–234 (TNRGAGEVIS…NIKNSWKKVA (138 aa)) the chain is on the extracellular side. Asn180 is a glycosylation site (N-linked (GlcNAc...) asparagine). A helical membrane pass occupies residues 235–255 (KVNIVFLIFLIIVYSVGCCAF). Residues 256-263 (RNNRKRSW) lie on the Cytoplasmic side of the membrane.

It belongs to the tetraspanin (TM4SF) family.

Its subcellular location is the membrane. Its function is as follows. May be involved in the regulation of cell differentiation. This chain is Tetraspanin-7 (TET7), found in Arabidopsis thaliana (Mouse-ear cress).